The chain runs to 417 residues: Acetyltransferase cdmC (417 aa).

A glycan (N-linked (GlcNAc...) asparagine) is linked at Asn-64. 3 helical membrane-spanning segments follow: residues 308 to 328, 357 to 377, and 389 to 409; these read IPDG…GYLV, GIFW…YPLL, and LVES…AFIL.

It belongs to the wax synthase family.

It localises to the membrane. The catalysed reaction is chrodrimanin A + acetyl-CoA = chrodrimanin B + CoA. It participates in secondary metabolite biosynthesis; terpenoid biosynthesis. In terms of biological role, acetyltransferase; part of the gene cluster that mediates the biosynthesis of chrodrimanin B, a meroterpenoid that acts as a potent blocker of insect GABA-gated chloride channels. The first step of the pathway is the biosynthesis of 6-hydroxymellein by the polyketide synthase cdmE. The prenyltransferase cdmH acts as a 6-hydroxymellein 5-farnesyltransferase and produces the hydrophobic metabolite verruculide C. The FAD-dependent monooxygenase cdmI further converts verruculide C into verruculide B. The terpene cyclase cdmG then produced the pentacyclic molecule 3-hydroxypentacecilide A, the backbone structure of chrodrimanin B, via folding the farnesyl moiety of the substrate into the chair-boat conformation. The short-chain dehydrogenase/reductase cdmF functions as the 3-OH dehydrogenase that oxidizes the C-3 hydroxyl group of 3-hydroxypentacecilide A and produces chrodrimanin C, the dehydrogenated product of 3-hydroxypentacecilide A. The cytochrome P450 monooxygenase cdmJ then accepts both 3-hydroxypentacecilide A and chrodrimanin C and functions as a C-7-beta-hydroxylase to produce respectively chrodrimanin H and chrodrimanin F. The dioxygenase cdmA accepts chrodrimanin H to afford chrodrimanin E, which is further transformed to chrodrimanin A by the dioxygenase cdmD. CdmA can also accept chrodrimanin C as substrate to convert it into verruculide A, which is further converted into chrodrimanin T by cdmD. The last step of the biosynthesis is proposed to be performed by the acetyltransferase cdmC which acetylates chrodrimanin A to yield chrodrimanin B. The pathway may also lead to the production of additional shunt products, including chrodrimanins T and U. The chain is Acetyltransferase cdmC from Talaromyces verruculosus (Penicillium verruculosum).